The following is a 71-amino-acid chain: Large ribosomal subunit protein bL31 (71 aa).

Positions 16, 18, 37, and 40 each coordinate Zn(2+).

It belongs to the bacterial ribosomal protein bL31 family. Type A subfamily. As to quaternary structure, part of the 50S ribosomal subunit. Zn(2+) is required as a cofactor.

In terms of biological role, binds the 23S rRNA. The chain is Large ribosomal subunit protein bL31 from Nitratidesulfovibrio vulgaris (strain ATCC 29579 / DSM 644 / CCUG 34227 / NCIMB 8303 / VKM B-1760 / Hildenborough) (Desulfovibrio vulgaris).